Here is a 70-residue protein sequence, read N- to C-terminus: MTTKITGLVKWFNPEKGFGFITPKDGSKDVFVHFSAIQSNEFRTLNENQEVEFSVEQGPKGPSAVNVVAL.

One can recognise a CSD domain in the interval 7–67 (GLVKWFNPEK…GPKGPSAVNV (61 aa)).

It is found in the cytoplasm. The sequence is that of Cold shock-like protein CspJ (cspJ) from Salmonella typhimurium (strain SL1344).